Here is a 109-residue protein sequence, read N- to C-terminus: Nucleoid-associated protein BU482 (109 aa).

The protein belongs to the YbaB/EbfC family. As to quaternary structure, homodimer.

The protein localises to the cytoplasm. Its subcellular location is the nucleoid. Binds to DNA and alters its conformation. May be involved in regulation of gene expression, nucleoid organization and DNA protection. The polypeptide is Nucleoid-associated protein BU482 (Buchnera aphidicola subsp. Acyrthosiphon pisum (strain APS) (Acyrthosiphon pisum symbiotic bacterium)).